The following is a 283-amino-acid chain: Non-selective voltage-gated ion channel VDAC3 (283 aa).

Position 2 is an N-acetylcysteine (Cys2). Thr4 carries the post-translational modification Phosphothreonine. Lys12, Lys15, and Lys20 each carry N6-acetyllysine. 2 beta stranded membrane passes run 26 to 35 (MVKIDLKTKS) and 39 to 47 (VEFSTSGHA). A Glycyl lysine isopeptide (Lys-Gly) (interchain with G-Cter in ubiquitin) cross-link involves residue Lys53. Beta stranded transmembrane passes span 54-64 (ASGNLETKYKV), 69-76 (LTFTQKWN), and 80-89 (TLGTEISWEN). The residue at position 90 (Lys90) is an N6-acetyllysine. Residues 95-104 (LKLTLDTIFV) traverse the membrane as a beta stranded segment. Residues Lys109 and Lys110 each participate in a glycyl lysine isopeptide (Lys-Gly) (interchain with G-Cter in ubiquitin) cross-link. 10 beta stranded membrane passes run 111–120 (SGKLKASYRR), 123–130 (FSLGSNVD), 137–145 (TIYGWAVLA), 150–158 (LAGYQMSFD), 163–175 (KLSQ…GYKA), 178–185 (FQLHTHVN), 189–198 (EFGGSIYQKV), 202–211 (IETSINLAWT), 218–227 (RFGIAAKYKL), and 231–238 (TSLSAKVN). The residue at position 241 (Ser241) is a Phosphoserine. Residues 242 to 244 (LIG) and 260 to 264 (SALID) contribute to the NAD(+) site. Beta stranded transmembrane passes span 242–251 (LIGLGYTQTL) and 254–263 (GVKLTLSALI). The residue at position 266 (Lys266) is an N6-acetyllysine; alternate. Residue Lys266 forms a Glycyl lysine isopeptide (Lys-Gly) (interchain with G-Cter in ubiquitin); alternate linkage. The chain crosses the membrane as a beta stranded span at residues 273–282 (HKVGLGFELE).

It belongs to the eukaryotic mitochondrial porin family. As to quaternary structure, interacts with ARMC12 in a TBC1D21-dependent manner. Interacts with MISFA. Ubiquitinated by PRKN during mitophagy, leading to its degradation and enhancement of mitophagy. Deubiquitinated by USP30. As to expression, highest levels of expression detected in testis, less but still abundant expression in heart, kidney, brain, and skeletal muscle.

The protein resides in the mitochondrion outer membrane. The protein localises to the membrane. It catalyses the reaction chloride(in) = chloride(out). The enzyme catalyses K(+)(in) = K(+)(out). Functionally, non-selective voltage-gated ion channel that mediates the transport of anions and cations through the mitochondrion outer membrane and plasma membrane. Forms a high-conducting channel with a stable open state and a voltage-induced closure with a mild preference for anions over cations. Involved in male fertility and sperm mitochondrial sheath formation. This Mus musculus (Mouse) protein is Non-selective voltage-gated ion channel VDAC3.